We begin with the raw amino-acid sequence, 974 residues long: Apical junction component 1 homolog (974 aa).

Disordered stretches follow at residues 23 to 137 (PGLT…PSYP), 201 to 233 (ARSS…PRHV), and 306 to 326 (CSRP…GGSY). Ser-52 bears the Phosphoserine mark. Residues 69-79 (EPPPPEPAPPR) are compositionally biased toward pro residues. The segment covering 116–134 (RGREAQRAVRVEGSPRREP) has biased composition (basic and acidic residues). Position 129 is a phosphoserine (Ser-129). A compositionally biased stretch (polar residues) spans 201 to 216 (ARSSRSCAPRETTSWA). Omega-N-methylarginine is present on Arg-322. Ser-468, Ser-509, and Ser-512 each carry phosphoserine. Residues 539–576 (DLRSVDRPTAKGWELPGGRPRQPVSTVPEGPASSRQRS) form a disordered region. Ser-593 carries the post-translational modification Phosphoserine. The segment at 618-661 (AGPGGATLLAPSRSPPASAGSTEEPTGSGEAADASPEPSADEDD) is disordered. Residues 623–636 (ATLLAPSRSPPASA) show a composition bias toward low complexity. At Arg-749 the chain carries Asymmetric dimethylarginine; alternate. Arg-749 carries the post-translational modification Omega-N-methylarginine; alternate.

It localises to the apical cell membrane. The protein resides in the cell projection. The protein localises to the cilium. Its subcellular location is the cell junction. It is found in the adherens junction. In terms of biological role, may be involved in the control of adherens junction integrity. The polypeptide is Apical junction component 1 homolog (Ajm1) (Mus musculus (Mouse)).